The primary structure comprises 1440 residues: Pentatricopeptide repeat-containing protein At3g18110, chloroplastic (1440 aa).

The transit peptide at 1–44 (MAVSAGALAFPALSVRATLNPEIKDEQANISSTTSSSQKFTYSR) directs the protein to the chloroplast. Positions 63–72 (TPSQTLSSPV) are enriched in polar residues. Residues 63 to 84 (TPSQTLSSPVSPIAGTPDSGDV) are disordered. 25 PPR repeats span residues 224 to 258 (RVQVYNAMMGVYSRSGKFSKAQELVDAMRQRGCVP), 259 to 295 (DLISFNTLINARLKSGGLTPNLAVELLDMVRNSGLRP), 296 to 330 (DAITYNTLLSACSRDSNLDGAVKVFEDMEAHRCQP), 331 to 365 (DLWTYNAMISVYGRCGLAAEAERLFMELELKGFFP), 366 to 400 (DAVTYNSLLYAFARERNTEKVKEVYQQMQKMGFGK), 401 to 431 (DEMTYNTIIHMYGKQGQLDLALQLYKDMKGL), 437 to 471 (DAITYTVLIDSLGKANRTVEAAALMSEMLDVGIKP), 472 to 506 (TLQTYSALICGYAKAGKREEAEDTFSCMLRSGTKP), 507 to 541 (DNLAYSVMLDVLLRGNETRKAWGLYRDMISDGHTP), 542 to 572 (SYTLYELMILGLMKENRSDDIQKTIRDMEEL), 608 to 638 (ENDTLLSILGSYSSSGRHSEAFELLEFLKEH), 643 to 678 (KRLITEALIVLHCKVNNLSAALDEYFADPCVHGWCF), 680 to 714 (SSTMYETLLHCCVANEHYAEASQVFSDLRLSGCEA), 715 to 749 (SESVCKSMVVVYCKLGFPETAHQVVNQAETKGFHF), 751 to 785 (CSPMYTDIIEAYGKQKLWQKAESVVGNLRQSGRTP), 786 to 820 (DLKTWNSLMSAYAQCGCYERARAIFNTMMRDGPSP), 821 to 855 (TVESINILLHALCVDGRLEELYVVVEELQDMGFKI), 856 to 890 (SKSSILLMLDAFARAGNIFEVKKIYSSMKAAGYLP), 891 to 925 (TIRLYRMMIELLCKGKRVRDAEIMVSEMEEANFKV), 926 to 960 (ELAIWNSMLKMYTAIEDYKKTVQVYQRIKETGLEP), 961 to 995 (DETTYNTLIIMYCRDRRPEEGYLLMQQMRNLGLDP), 996 to 1030 (KLDTYKSLISAFGKQKCLEQAEQLFEELLSKGLKL), 1031 to 1065 (DRSFYHTMMKISRDSGSDSKAEKLLQMMKNAGIEP), 1066 to 1100 (TLATMHLLMVSYSSSGNPQEAEKVLSNLKDTEVEL), and 1101 to 1135 (TTLPYSSVIDAYLRSKDYNSGIERLLEMKKEGLEP). The segment at 1419 to 1440 (KKKKMGNETNGINTRRKFVRSK) is disordered.

This sequence belongs to the PPR family. P subfamily.

The protein localises to the plastid. It is found in the chloroplast. Its function is as follows. May play a role in embryogenesis. This is Pentatricopeptide repeat-containing protein At3g18110, chloroplastic (EMB1270) from Arabidopsis thaliana (Mouse-ear cress).